We begin with the raw amino-acid sequence, 233 residues long: Antiholin-like protein LrgB (233 aa).

7 consecutive transmembrane segments (helical) span residues 9–29 (TPYFGILLSVIPFFLATILFE), 34–54 (FFLFAPLFVSMVFGVAFLYLT), 63–83 (IGGDIIYFFLEPATICFAIPL), 97–117 (IIGGIGIGTVVALLIILTFAK), 121–141 (FANDVILSMLPQAATTAIALP), 144–164 (AGIGGIKELTSLAVILNGVII), and 212–232 (IALVLVGVVVVAVVPVFVAIF).

Belongs to the CidB/LrgB family. LrgB subfamily.

It localises to the cell membrane. Functionally, inhibits the expression or activity of extracellular murein hydrolases by interacting, possibly with LrgA, with the holin-like proteins CidA and/or CidB. The LrgAB and CidAB proteins may affect the proton motive force of the membrane. May be involved in programmed cell death (PCD), possibly triggering PCD in response to antibiotics and environmental stresses. The chain is Antiholin-like protein LrgB from Staphylococcus aureus (strain Mu3 / ATCC 700698).